A 328-amino-acid chain; its full sequence is Renalase (328 aa).

FAD-binding positions include A13, D32–K33, R40, and Q56–Y57. Substrate contacts are provided by residues Y57 to R61 and S96 to D98. I128 contacts FAD. Residue T185 coordinates substrate. An FAD-binding site is contributed by D302. Substrate is bound at residue R308. An FAD-binding site is contributed by V309.

Belongs to the bacterial renalase family. FAD is required as a cofactor.

It catalyses the reaction 1,2-dihydro-beta-NAD + O2 + H(+) = H2O2 + NAD(+). The catalysed reaction is 1,2-dihydro-beta-NADP + O2 + H(+) = H2O2 + NADP(+). It carries out the reaction 1,6-dihydro-beta-NADP + O2 + H(+) = H2O2 + NADP(+). The enzyme catalyses 1,6-dihydro-beta-NAD + O2 + H(+) = H2O2 + NAD(+). Its function is as follows. Catalyzes the oxidation of the 1,2-dihydro- and 1,6-dihydro- isomeric forms of beta-NAD(P) back to beta-NAD(P)+. Has a preference for 1,2-dihydro-beta-NAD as substrate. May serve to protect primary metabolism dehydrogenases from inhibition by the 1,2-dihydro- and 1,6-dihydro-beta-NAD(P) isomers. This chain is Renalase, found in Pseudomonas syringae pv. tomato (strain ATCC BAA-871 / DC3000).